A 523-amino-acid chain; its full sequence is Cytochrome P450 monooxygenase ple5B (523 aa).

Residues 16–33 traverse the membrane as a helical segment; it reads IAAAAAGSAVAVYKLLQL. N-linked (GlcNAc...) asparagine glycosylation is found at Asn82, Asn103, Asn122, Asn295, Asn379, and Asn423. A heme-binding site is contributed by Cys446.

The protein belongs to the cytochrome P450 family. The cofactor is heme.

Its subcellular location is the membrane. The protein operates within secondary metabolite biosynthesis; terpenoid biosynthesis. Cytochrome P450 monooxygenase; part of the gene cluster that mediates the biosynthesis of pleuromutilin, a tricyclic diterpene showing antibacterial properties. The geranylgeranyl diphosphate (GGPP) synthase ple4 catalyzes the first step in pleuromutilin biosynthesis. GGPP is then substrate of the premutilin synthase (PS) ple3 to yield premutilin. Premutilin synthase is a bifunctional enzyme composed of the fusion of a class II diterpene cyclase (DTC) and a class I diterpene synthase (DTS), with the corresponding domains and active sites containing characteristic aspartate-rich motifs. GGPP is first converted to mutildienyl-diphosphate (MPP) at the class II DTC site. MPP is subsequently further cyclized at the class I DTS site, followed by a 1,5-hydride shift and addition of water prior to terminating deprotonation, to yield premutilin. The cytochrome P450 monooxygenases ple5 and ple6 hydroxylate premutilin at C-11 and C-3, respectively, producing 11-hydroxypremutilin and 3-hydroxypremutilin. The combination of the actions of both ple5 and ple6 leads to the production of 3,11-dihydroxypremutilin. The short chain dehydrogenase ple7 further converts 3,11-dihydroxypremutilin into mutilin. The acetyltransferase ple2 then acetylates mutilin to produce 14-O-acetylmutilin. Finally, the cytochrome P450 monooxygenase ple1 catalyzes hydroxylation on the alpha position of the acetyl side chain of 14-O-acetylmutilin to yield pleuromutilin. The polypeptide is Cytochrome P450 monooxygenase ple5B (Rhodocybe pseudopiperita (Clitopilus pseudopiperitus)).